Consider the following 1076-residue polypeptide: Structural maintenance of chromosomes protein 5 (1076 aa).

An ATP-binding site is contributed by 49 to 56 (GHNGSGKS). Residues 190–415 (STSIEDKCTT…KRDEEQNSQL (226 aa)) adopt a coiled-coil conformation. Over residues 375 to 410 (EQKYSTAERDSRQEEDAIQKKSYEMRQLENKKRDEE) the composition is skewed to basic and acidic residues. The disordered stretch occupies residues 375-420 (EQKYSTAERDSRQEEDAIQKKSYEMRQLENKKRDEEQNSQLNRQDR). The segment at 416–617 (NRQDRYRVLQ…ANTWRDQFFK (202 aa)) is flexible hinge. Coiled coils occupy residues 627 to 713 (NSIL…EKKA) and 749 to 786 (KSRV…ALNH).

It belongs to the SMC family. SMC5 subfamily. As to quaternary structure, interacts with smc-6. In terms of tissue distribution, expressed in the germline (at protein level).

Its subcellular location is the nucleus. It is found in the chromosome. Functionally, core component of the smc-5/smc-6 complex. Functions in DNA double strand break repair by promoting sister-chromatid homologous recombination during meiosis. Acts in a DNA repair pathway for removal of ionizing radiation- and ultraviolet (UV) radiation-induced DNA lesions that is distinct from classical nucleotide excision repair and the translesion synthesis pathway. Also involved in the recovery of stalled replication forks. The protein is Structural maintenance of chromosomes protein 5 of Caenorhabditis elegans.